The chain runs to 134 residues: ATP synthase epsilon chain, chloroplastic (134 aa).

This sequence belongs to the ATPase epsilon chain family. In terms of assembly, F-type ATPases have 2 components, CF(1) - the catalytic core - and CF(0) - the membrane proton channel. CF(1) has five subunits: alpha(3), beta(3), gamma(1), delta(1), epsilon(1). CF(0) has three main subunits: a, b and c.

It is found in the plastid. The protein resides in the chloroplast thylakoid membrane. In terms of biological role, produces ATP from ADP in the presence of a proton gradient across the membrane. This is ATP synthase epsilon chain, chloroplastic from Drimys granadensis.